A 1048-amino-acid polypeptide reads, in one-letter code: Nonsense-mediated mRNA decay protein 5 (1048 aa).

One can recognise an Importin N-terminal domain in the interval 24-104 (AETHLKNASK…KDMLIKTMVS (81 aa)). The residue at position 977 (Ser977) is a Phosphoserine.

GTP-bound Ran dissociates the isolated NMD5/TFIIS complex.

The protein localises to the nucleus. It is found in the cytoplasm. Functionally, active in protein import into the nucleus. Its major import substrate is transcription elongation factor TFIIS. In Saccharomyces cerevisiae (strain ATCC 204508 / S288c) (Baker's yeast), this protein is Nonsense-mediated mRNA decay protein 5 (NMD5).